We begin with the raw amino-acid sequence, 924 residues long: Isoleucine--tRNA ligase (924 aa).

Positions 57–67 (PYANGDIHMGH) match the 'HIGH' region motif. Glu552 lines the L-isoleucyl-5'-AMP pocket. The 'KMSKS' region motif lies at 593 to 597 (KMSKS). Lys596 is a binding site for ATP. Positions 891, 894, 911, and 914 each coordinate Zn(2+).

It belongs to the class-I aminoacyl-tRNA synthetase family. IleS type 1 subfamily. In terms of assembly, monomer. The cofactor is Zn(2+).

The protein localises to the cytoplasm. The enzyme catalyses tRNA(Ile) + L-isoleucine + ATP = L-isoleucyl-tRNA(Ile) + AMP + diphosphate. Its function is as follows. Catalyzes the attachment of isoleucine to tRNA(Ile). As IleRS can inadvertently accommodate and process structurally similar amino acids such as valine, to avoid such errors it has two additional distinct tRNA(Ile)-dependent editing activities. One activity is designated as 'pretransfer' editing and involves the hydrolysis of activated Val-AMP. The other activity is designated 'posttransfer' editing and involves deacylation of mischarged Val-tRNA(Ile). This is Isoleucine--tRNA ligase from Geobacillus thermodenitrificans (strain NG80-2).